A 195-amino-acid polypeptide reads, in one-letter code: MASKGAARVRKKEIVKVVHGALLRTNIKAQMASAAPPLGPQLGQRGLNVANFCKEFNKETGHFKQGVPLPTRITVKPDRTYDLEICTPTTTWLLKQAAGIGRGKASKDEIVGKLTVKHLYEIAKIKSRDKALQHVPLEQICRMLIKTCRTLGIDVQYHDLDPVELKEFLVARKEKVDAQLKDLADKKAAKMLRTT.

Belongs to the universal ribosomal protein uL11 family. As to quaternary structure, component of the mitochondrial ribosome large subunit (39S) which comprises a 16S rRNA and about 50 distinct proteins.

Its subcellular location is the mitochondrion. This is Large ribosomal subunit protein uL11m (mrpl-11) from Caenorhabditis elegans.